We begin with the raw amino-acid sequence, 297 residues long: 4-diphosphocytidyl-2-C-methyl-D-erythritol kinase (297 aa).

The active site involves K10. P95–A105 contributes to the ATP binding site. Residue D137 is part of the active site.

This sequence belongs to the GHMP kinase family. IspE subfamily.

It catalyses the reaction 4-CDP-2-C-methyl-D-erythritol + ATP = 4-CDP-2-C-methyl-D-erythritol 2-phosphate + ADP + H(+). It functions in the pathway isoprenoid biosynthesis; isopentenyl diphosphate biosynthesis via DXP pathway; isopentenyl diphosphate from 1-deoxy-D-xylulose 5-phosphate: step 3/6. In terms of biological role, catalyzes the phosphorylation of the position 2 hydroxy group of 4-diphosphocytidyl-2C-methyl-D-erythritol. The protein is 4-diphosphocytidyl-2-C-methyl-D-erythritol kinase of Streptomyces avermitilis (strain ATCC 31267 / DSM 46492 / JCM 5070 / NBRC 14893 / NCIMB 12804 / NRRL 8165 / MA-4680).